The sequence spans 235 residues: 5'-methylthioadenosine/S-adenosylhomocysteine nucleosidase (235 aa).

The Proton acceptor role is filled by Glu12. Residues Gly78, Met153, and 174–175 (ME) contribute to the substrate site. Asp198 serves as the catalytic Proton donor.

The protein belongs to the PNP/UDP phosphorylase family. MtnN subfamily.

The catalysed reaction is S-adenosyl-L-homocysteine + H2O = S-(5-deoxy-D-ribos-5-yl)-L-homocysteine + adenine. The enzyme catalyses S-methyl-5'-thioadenosine + H2O = 5-(methylsulfanyl)-D-ribose + adenine. It carries out the reaction 5'-deoxyadenosine + H2O = 5-deoxy-D-ribose + adenine. Its pathway is amino-acid biosynthesis; L-methionine biosynthesis via salvage pathway; S-methyl-5-thio-alpha-D-ribose 1-phosphate from S-methyl-5'-thioadenosine (hydrolase route): step 1/2. Functionally, catalyzes the irreversible cleavage of the glycosidic bond in both 5'-methylthioadenosine (MTA) and S-adenosylhomocysteine (SAH/AdoHcy) to adenine and the corresponding thioribose, 5'-methylthioribose and S-ribosylhomocysteine, respectively. Also cleaves 5'-deoxyadenosine, a toxic by-product of radical S-adenosylmethionine (SAM) enzymes, into 5-deoxyribose and adenine. In Pseudoalteromonas translucida (strain TAC 125), this protein is 5'-methylthioadenosine/S-adenosylhomocysteine nucleosidase.